The following is a 194-amino-acid chain: UPF0301 protein FTA_1286 (194 aa).

The protein belongs to the UPF0301 (AlgH) family.

This chain is UPF0301 protein FTA_1286, found in Francisella tularensis subsp. holarctica (strain FTNF002-00 / FTA).